The sequence spans 319 residues: Phosphoribosylformylglycinamidine cyclo-ligase (319 aa).

It belongs to the AIR synthase family.

It is found in the cytoplasm. It carries out the reaction 2-formamido-N(1)-(5-O-phospho-beta-D-ribosyl)acetamidine + ATP = 5-amino-1-(5-phospho-beta-D-ribosyl)imidazole + ADP + phosphate + H(+). It participates in purine metabolism; IMP biosynthesis via de novo pathway; 5-amino-1-(5-phospho-D-ribosyl)imidazole from N(2)-formyl-N(1)-(5-phospho-D-ribosyl)glycinamide: step 2/2. The polypeptide is Phosphoribosylformylglycinamidine cyclo-ligase (Sulfurisphaera tokodaii (strain DSM 16993 / JCM 10545 / NBRC 100140 / 7) (Sulfolobus tokodaii)).